A 475-amino-acid chain; its full sequence is Ribulose bisphosphate carboxylase large chain (475 aa).

The propeptide occupies 1-2; that stretch reads MS. P3 carries the post-translational modification N-acetylproline. Position 14 is an N6,N6,N6-trimethyllysine (K14). Substrate contacts are provided by N123 and T173. The Proton acceptor role is filled by K175. K177 lines the substrate pocket. Mg(2+) contacts are provided by K201, D203, and E204. K201 is modified (N6-carboxylysine). The Proton acceptor role is filled by H294. Substrate contacts are provided by R295, H327, and S379.

This sequence belongs to the RuBisCO large chain family. Type I subfamily. Heterohexadecamer of 8 large chains and 8 small chains; disulfide-linked. The disulfide link is formed within the large subunit homodimers. Mg(2+) serves as cofactor. Post-translationally, the disulfide bond which can form in the large chain dimeric partners within the hexadecamer appears to be associated with oxidative stress and protein turnover.

Its subcellular location is the plastid. It is found in the chloroplast. The enzyme catalyses 2 (2R)-3-phosphoglycerate + 2 H(+) = D-ribulose 1,5-bisphosphate + CO2 + H2O. The catalysed reaction is D-ribulose 1,5-bisphosphate + O2 = 2-phosphoglycolate + (2R)-3-phosphoglycerate + 2 H(+). Functionally, ruBisCO catalyzes two reactions: the carboxylation of D-ribulose 1,5-bisphosphate, the primary event in carbon dioxide fixation, as well as the oxidative fragmentation of the pentose substrate in the photorespiration process. Both reactions occur simultaneously and in competition at the same active site. The sequence is that of Ribulose bisphosphate carboxylase large chain from Magnolia acuminata (Cucumber tree).